Consider the following 260-residue polypeptide: Acetylglutamate kinase (260 aa).

Substrate-binding positions include 46–47, Arg68, and Asn160; that span reads GG.

Belongs to the acetylglutamate kinase family. ArgB subfamily.

The protein resides in the cytoplasm. The enzyme catalyses N-acetyl-L-glutamate + ATP = N-acetyl-L-glutamyl 5-phosphate + ADP. It participates in amino-acid biosynthesis; L-arginine biosynthesis; N(2)-acetyl-L-ornithine from L-glutamate: step 2/4. Catalyzes the ATP-dependent phosphorylation of N-acetyl-L-glutamate. This Shewanella sp. (strain W3-18-1) protein is Acetylglutamate kinase.